The sequence spans 384 residues: Viral protein 1 (384 aa).

This is Viral protein 1 from Chaetoceros setoense (Chaetoceros setoense DNA virus).